The following is a 208-amino-acid chain: EF-hand protein 5 variant 1 (208 aa).

Residues 1–34 form a disordered region; it reads MQARGTVKVQGDAKVDGKMSTGQHSHHQHLNSTQ. 4 consecutive EF-hand domains span residues 64 to 98, 99 to 134, 135 to 170, and 171 to 206; these read MAEG…HLTE, EEFH…EVDD, TMAD…LGER, and STPE…SRVN. Ca(2+) is bound by residues Glu-118, Asp-123, Asp-148, Thr-152, and Tyr-154.

The protein is EF-hand protein 5 variant 1 of Trypanosoma cruzi.